The sequence spans 66 residues: ATP synthase F(0) complex subunit 8 (66 aa).

At M1 the chain carries N-formylmethionine. A helical transmembrane segment spans residues 8 to 24 (TWLTMILSMFLTLFIIF). An N6-acetyllysine; alternate modification is found at K54. K54 carries the post-translational modification N6-succinyllysine; alternate. The residue at position 57 (K57) is an N6-acetyllysine.

This sequence belongs to the ATPase protein 8 family. In terms of assembly, component of the ATP synthase complex composed at least of ATP5F1A/subunit alpha, ATP5F1B/subunit beta, ATP5MC1/subunit c (homooctomer), MT-ATP6/subunit a, MT-ATP8/subunit 8, ATP5ME/subunit e, ATP5MF/subunit f, ATP5MG/subunit g, ATP5MK/subunit k, ATP5MJ/subunit j, ATP5F1C/subunit gamma, ATP5F1D/subunit delta, ATP5F1E/subunit epsilon, ATP5PF/subunit F6, ATP5PB/subunit b, ATP5PD/subunit d, ATP5PO/subunit OSCP. ATP synthase complex consists of a soluble F(1) head domain (subunits alpha(3) and beta(3)) - the catalytic core - and a membrane F(0) domain - the membrane proton channel (subunits c, a, 8, e, f, g, k and j). These two domains are linked by a central stalk (subunits gamma, delta, and epsilon) rotating inside the F1 region and a stationary peripheral stalk (subunits F6, b, d, and OSCP). Interacts with PRICKLE3.

The protein localises to the mitochondrion membrane. In terms of biological role, subunit 8, of the mitochondrial membrane ATP synthase complex (F(1)F(0) ATP synthase or Complex V) that produces ATP from ADP in the presence of a proton gradient across the membrane which is generated by electron transport complexes of the respiratory chain. ATP synthase complex consist of a soluble F(1) head domain - the catalytic core - and a membrane F(1) domain - the membrane proton channel. These two domains are linked by a central stalk rotating inside the F(1) region and a stationary peripheral stalk. During catalysis, ATP synthesis in the catalytic domain of F(1) is coupled via a rotary mechanism of the central stalk subunits to proton translocation. In vivo, can only synthesize ATP although its ATP hydrolase activity can be activated artificially in vitro. Part of the complex F(0) domain. This is ATP synthase F(0) complex subunit 8 from Bos taurus (Bovine).